A 1364-amino-acid chain; its full sequence is Serine protease SepA autotransporter (1364 aa).

The N-terminal stretch at 1 to 56 (MNKIYYLKYCHITKSLIAVSELARRVTCKSHRRLSRRVILTSVAALSLSSAWPALS) is a signal peptide. In terms of domain architecture, Peptidase S6 spans 57–307 (ATVSAEIPYQ…VVTTQDFLGQ (251 aa)). Active-site charge relay system residues include H134, D162, and S267. The 267-residue stretch at 1098–1364 (DTQGDAGVWA…AINANFRYVF (267 aa)) folds into the Autotransporter domain.

Post-translationally, cleaved to release the mature protein from the outer membrane. Cleavage is performed by an unknown protease.

The protein resides in the periplasm. It is found in the secreted. The protein localises to the cell surface. Its subcellular location is the cell outer membrane. Its activity is regulated as follows. Inhibited by the serine protease inhibitor PMSF, but not by benzamidine, alpha 1-antitrypsin, alpha 1-antichymotrypsin. Not inhibited by metalloprotease inhibitors such as EDTA and orthophenanthroline. Functionally, major protein secreted in laboratory media showing proteolytic activity. May be involved in invasion and destruction of host intestinal epithelium. This is Serine protease SepA autotransporter (sepA) from Shigella flexneri.